We begin with the raw amino-acid sequence, 352 residues long: C-C chemokine receptor type 5 (352 aa).

The Extracellular portion of the chain corresponds to 1–30; that stretch reads MDYQVSSPTYDIDYYTSEPCQKVNVKQIAA. Tyr-3 is subject to Sulfotyrosine. Ser-6 and Ser-7 each carry an O-linked (GalNAc...) serine glycan. 3 positions are modified to sulfotyrosine: Tyr-10, Tyr-14, and Tyr-15. 2 cysteine pairs are disulfide-bonded: Cys-20–Cys-269 and Cys-101–Cys-178. Residues 31–58 form a helical membrane-spanning segment; sequence RLLPPLYSLVFIFGFVGNILVVLILINC. Residues 59-68 are Cytoplasmic-facing; sequence KRLKSMTDIY. Residues 69 to 89 form a helical membrane-spanning segment; sequence LLNLAISDLFFLLTVPFWAHY. Residues 90–102 lie on the Extracellular side of the membrane; it reads AAAQWDFGNTMCQ. A helical transmembrane segment spans residues 103–124; the sequence is LLTGLYFIGFFSGIFFIILLTI. The Cytoplasmic segment spans residues 125 to 141; it reads DRYLAIVHAVFALKART. Residues 142-166 traverse the membrane as a helical segment; sequence VTFGVVTSVITWVVAVFASLPGIIF. The Extracellular portion of the chain corresponds to 167 to 198; sequence TRSQREGLHYTCSSHFPYSQYQFWKNFQTLKI. A helical transmembrane segment spans residues 199-218; sequence VILGLVLPLLVMVICYSGIL. Over 219–235 the chain is Cytoplasmic; it reads KTLLRCRNEKKRHRAVR. Residues 236-260 form a helical membrane-spanning segment; that stretch reads LIFTIMIVYFLFWAPYNIVLLLNTF. The Extracellular segment spans residues 261–277; sequence QEFFGLNNCSSSNRLDQ. Residues 278 to 301 form a helical membrane-spanning segment; it reads AMQVTETLGMTHCCINPIIYAFVG. Topologically, residues 302-352 are cytoplasmic; the sequence is EKFRNYLLVFFQKHIAKRFCKCCYIFQQEAPERASSVYTRSTGEQEISVGL. 3 S-palmitoyl cysteine lipidation sites follow: Cys-321, Cys-323, and Cys-324. Phosphoserine; by BARK1 occurs at positions 336, 337, 342, and 349.

It belongs to the G-protein coupled receptor 1 family. As to quaternary structure, interacts with PRAF2. Efficient ligand binding to CCL3/MIP-1alpha and CCL4/MIP-1beta requires sulfation, O-glycosylation and sialic acid modifications. Glycosylation on Ser-6 is required for efficient binding of CCL4. Interacts with GRK2. Interacts with ARRB1 and ARRB2. Interacts with CNIH4. Interacts with S100A4; this interaction stimulates T-lymphocyte chemotaxis. Post-translationally, sulfated on at least 2 of the N-terminal tyrosines. Sulfation is required for efficient binding of the chemokines, CCL3 and CCL4. In terms of processing, palmitoylation in the C-terminal is important for cell surface expression. Phosphorylation on serine residues in the C-terminal is stimulated by binding CC chemokines especially by APO-RANTES. Post-translationally, O-glycosylated, but not N-glycosylated. Ser-6 appears to be the major site even if Ser-7 may be also O-glycosylated. Also sialylated glycans present which contribute to chemokine binding. Thr-16 and Ser-17 may also be glycosylated and, if so, with small moieties such as a T-antigen.

The protein localises to the cell membrane. Receptor for a number of inflammatory CC-chemokines including CCL3/MIP-1-alpha, CCL4/MIP-1-beta and RANTES and subsequently transduces a signal by increasing the intracellular calcium ion level. May play a role in the control of granulocytic lineage proliferation or differentiation. Participates in T-lymphocyte migration to the infection site by acting as a chemotactic receptor. This is C-C chemokine receptor type 5 (CCR5) from Rhinopithecus bieti (Black snub-nosed monkey).